We begin with the raw amino-acid sequence, 391 residues long: Elongation factor Tu (391 aa).

The region spanning 10 to 201 (KPHVNIGTIG…AVDEYIPTPA (192 aa)) is the tr-type G domain. The tract at residues 19–26 (GHVDHGKT) is G1. 19 to 26 (GHVDHGKT) contributes to the GTP binding site. A Mg(2+)-binding site is contributed by Thr-26. Positions 55–59 (GITIS) are G2. The segment at 76-79 (DCPG) is G3. GTP is bound by residues 76–80 (DCPGH) and 131–134 (NKVD). The interval 131-134 (NKVD) is G4. A G5 region spans residues 169-171 (SAL).

It belongs to the TRAFAC class translation factor GTPase superfamily. Classic translation factor GTPase family. EF-Tu/EF-1A subfamily. Monomer.

Its subcellular location is the cytoplasm. It carries out the reaction GTP + H2O = GDP + phosphate + H(+). GTP hydrolase that promotes the GTP-dependent binding of aminoacyl-tRNA to the A-site of ribosomes during protein biosynthesis. The sequence is that of Elongation factor Tu from Ruegeria pomeroyi (strain ATCC 700808 / DSM 15171 / DSS-3) (Silicibacter pomeroyi).